Here is a 217-residue protein sequence, read N- to C-terminus: Twisted gastrulation protein homolog 1-A (217 aa).

The signal sequence occupies residues 1–26 (MRPALFLCPVLISVLFLLSSLSLISG). Residues Asn-53 and Asn-147 are each glycosylated (N-linked (GlcNAc...) asparagine).

The protein belongs to the twisted gastrulation protein family.

Its subcellular location is the secreted. Functionally, involved in dorsal-ventral patterning. Appears to function predominantly as a ventralizing factor, through its actions as a BMP signaling agonist, acting through both chd-dependent and chd-independent mechanisms. May also antagonize BMP signaling, probably via formation of ternary complexes with chd and BMPs, resulting in dorsalization. The protein is Twisted gastrulation protein homolog 1-A (twsg1a) of Danio rerio (Zebrafish).